The chain runs to 353 residues: Photosystem II D2 protein (353 aa).

Thr2 carries the N-acetylthreonine modification. At Thr2 the chain carries Phosphothreonine. The chain crosses the membrane as a helical span at residues 41-61 (CAYFALGGWFTGTTFVTSWYT). His118 serves as a coordination point for chlorophyll a. The chain crosses the membrane as a helical span at residues 125–141 (GFMLRQFELARSVQLRP). Residues Gln130 and Asn143 each contribute to the pheophytin a site. The helical transmembrane segment at 153 to 166 (VFVSVFLIYPLGQS) threads the bilayer. Residue His198 coordinates chlorophyll a. Residues 208–228 (AALLCAIHGATVENTLFEDGD) form a helical membrane-spanning segment. A plastoquinone-binding residues include His215 and Phe262. Fe cation is bound at residue His215. Residue His269 participates in Fe cation binding. A helical transmembrane segment spans residues 279 to 295 (GLWMSAIGVVGLALNLR).

Belongs to the reaction center PufL/M/PsbA/D family. As to quaternary structure, PSII is composed of 1 copy each of membrane proteins PsbA, PsbB, PsbC, PsbD, PsbE, PsbF, PsbH, PsbI, PsbJ, PsbK, PsbL, PsbM, PsbT, PsbX, PsbY, PsbZ, Psb30/Ycf12, at least 3 peripheral proteins of the oxygen-evolving complex and a large number of cofactors. It forms dimeric complexes. The D1/D2 heterodimer binds P680, chlorophylls that are the primary electron donor of PSII, and subsequent electron acceptors. It shares a non-heme iron and each subunit binds pheophytin, quinone, additional chlorophylls, carotenoids and lipids. There is also a Cl(-1) ion associated with D1 and D2, which is required for oxygen evolution. The PSII complex binds additional chlorophylls, carotenoids and specific lipids. serves as cofactor.

It localises to the plastid. The protein localises to the chloroplast thylakoid membrane. It catalyses the reaction 2 a plastoquinone + 4 hnu + 2 H2O = 2 a plastoquinol + O2. In terms of biological role, photosystem II (PSII) is a light-driven water:plastoquinone oxidoreductase that uses light energy to abstract electrons from H(2)O, generating O(2) and a proton gradient subsequently used for ATP formation. It consists of a core antenna complex that captures photons, and an electron transfer chain that converts photonic excitation into a charge separation. The D1/D2 (PsbA/PsbD) reaction center heterodimer binds P680, the primary electron donor of PSII as well as several subsequent electron acceptors. D2 is needed for assembly of a stable PSII complex. The polypeptide is Photosystem II D2 protein (Liriodendron tulipifera (Tuliptree)).